Consider the following 243-residue polypeptide: Small ribosomal subunit protein uS5 (243 aa).

A compositionally biased stretch (basic and acidic residues) spans 1 to 10 (MSDNETKETQ). A disordered region spans residues 1 to 50 (MSDNETKETQVAEETQNTVATESNNEDRKGRRGQRGEGRRGERRNRREEN). Residues 12-23 (AEETQNTVATES) show a composition bias toward polar residues. Basic and acidic residues predominate over residues 25–50 (NEDRKGRRGQRGEGRRGERRNRREEN). One can recognise an S5 DRBM domain in the interval 55 to 118 (LLDRVVTINR…LDAKKHMFSV (64 aa)).

This sequence belongs to the universal ribosomal protein uS5 family. Part of the 30S ribosomal subunit. Contacts proteins S4 and S8.

With S4 and S12 plays an important role in translational accuracy. Functionally, located at the back of the 30S subunit body where it stabilizes the conformation of the head with respect to the body. The chain is Small ribosomal subunit protein uS5 from Bifidobacterium longum (strain DJO10A).